The sequence spans 349 residues: Probable G-protein coupled receptor 21 (349 aa).

Residues 1–32 (MNSTWDGNQSSHPFCLLALGYLETVRFCLLEV) lie on the Extracellular side of the membrane. 2 N-linked (GlcNAc...) asparagine glycosylation sites follow: asparagine 2 and asparagine 8. A helical transmembrane segment spans residues 33–53 (LIIVFLTVLIISGNIIVIFVF). Topologically, residues 54-75 (HCAPLLNHHSTSYFIQTMAYAD) are cytoplasmic. The chain crosses the membrane as a helical span at residues 76 to 96 (LLVGVSCLVPSLSLLYYPLPI). Residues 97-104 (EEAMTCQV) are Extracellular-facing. The chain crosses the membrane as a helical span at residues 105 to 125 (FGFVVSVLKSISMASLACISI). The Cytoplasmic portion of the chain corresponds to 126–147 (DRYIAITKPLTYNTLVTPWRLR). A helical membrane pass occupies residues 148 to 168 (LCIFLIWLYSTLVFLPSFFHW). The Extracellular portion of the chain corresponds to 169–191 (GKPGYHGDVFQWCAESWHTNSYF). A helical membrane pass occupies residues 192–212 (TLFIVMMLYAPAALIVCFTYF). Topologically, residues 213–252 (NIFRICQQHTKEISERQARFSSQNGETGEPQTCPDKRYAM) are cytoplasmic. A helical membrane pass occupies residues 253–273 (VLFRITSVFYVLWLPYIIYFL). Residues 274–283 (LESSTGCSSR) lie on the Extracellular side of the membrane. The chain crosses the membrane as a helical span at residues 284–304 (LASFLTTWLAISNSFCNCIIY). Topologically, residues 305–349 (SLSNSVFQRGLKGLSGSLCTSCASHTTAKDPYTVRCKGPPNGSHI) are cytoplasmic.

Belongs to the G-protein coupled receptor 1 family.

It localises to the cell membrane. In terms of biological role, orphan receptor. The protein is Probable G-protein coupled receptor 21 (Gpr21) of Mus musculus (Mouse).